The sequence spans 1165 residues: DNA-directed RNA polymerase subunit beta (1165 aa).

This sequence belongs to the RNA polymerase beta chain family. In terms of assembly, the RNAP catalytic core consists of 2 alpha, 1 beta, 1 beta' and 1 omega subunit. When a sigma factor is associated with the core the holoenzyme is formed, which can initiate transcription.

The catalysed reaction is RNA(n) + a ribonucleoside 5'-triphosphate = RNA(n+1) + diphosphate. Functionally, DNA-dependent RNA polymerase catalyzes the transcription of DNA into RNA using the four ribonucleoside triphosphates as substrates. The chain is DNA-directed RNA polymerase subunit beta from Corynebacterium glutamicum (strain R).